A 557-amino-acid polypeptide reads, in one-letter code: Putative glutathione-regulated potassium-efflux system protein KefB (557 aa).

10 consecutive transmembrane segments (helical) span residues 2-22 (LGYL…ISDV), 24-44 (EILH…GLEL), 56-76 (IFGV…GLLM), 84-104 (AAVV…LQLM), 121-141 (VLLF…LLAG), 146-166 (HFDW…LIGG), 176-196 (FIAA…LVLG), 199-219 (LFMD…GVLL), 237-257 (GLLL…GVLY), and 260-280 (LLWV…VLYL). Residues 356–475 (KPQVIVVGFG…AGVTQFSRET (120 aa)) enclose the RCK N-terminal domain.

The protein belongs to the monovalent cation:proton antiporter 2 (CPA2) transporter (TC 2.A.37) family. KefB subfamily. Interacts with the regulatory subunit KefG.

The protein resides in the cell inner membrane. In terms of biological role, pore-forming subunit of a potassium efflux system that confers protection against electrophiles. Catalyzes K(+)/H(+) antiport. The protein is Putative glutathione-regulated potassium-efflux system protein KefB of Shigella flexneri.